The following is a 163-amino-acid chain: MEQNEFGLIEKIVDLNRVAKVVKGGRRFSFSALVVVGDGNGSVGFGMGKAQEVPEALRKATERAKKGMVQVPLVDGTLPYEVLGAFGAGRVLLKPASKGTGIIAGGAVRAIMEAVGIHDVLAKAIGTNNPHNVLRATMAGLTSLRSAEYVSQLRGKKLEAPRK.

The region spanning Leu8–Val71 is the S5 DRBM domain.

It belongs to the universal ribosomal protein uS5 family. Part of the 30S ribosomal subunit. Contacts proteins S4 and S8.

In terms of biological role, with S4 and S12 plays an important role in translational accuracy. Functionally, located at the back of the 30S subunit body where it stabilizes the conformation of the head with respect to the body. In Oleidesulfovibrio alaskensis (strain ATCC BAA-1058 / DSM 17464 / G20) (Desulfovibrio alaskensis), this protein is Small ribosomal subunit protein uS5.